The following is a 140-amino-acid chain: Endoribonuclease YbeY (140 aa).

Zn(2+)-binding residues include histidine 100, histidine 104, and histidine 110.

The protein belongs to the endoribonuclease YbeY family. It depends on Zn(2+) as a cofactor.

It localises to the cytoplasm. Single strand-specific metallo-endoribonuclease involved in late-stage 70S ribosome quality control and in maturation of the 3' terminus of the 16S rRNA. The protein is Endoribonuclease YbeY of Helicobacter pylori (strain Shi470).